The primary structure comprises 341 residues: Glycerol-3-phosphate dehydrogenase [NAD(P)+] (341 aa).

Residues Ser-14, Phe-15, Arg-35, and Lys-108 each contribute to the NADPH site. Sn-glycerol 3-phosphate contacts are provided by Lys-108 and Gly-136. NADPH is bound at residue Ala-140. Sn-glycerol 3-phosphate contacts are provided by Lys-191, Asp-244, Ser-254, Arg-255, and Asn-256. The Proton acceptor role is filled by Lys-191. Arg-255 provides a ligand contact to NADPH. The NADPH site is built by Val-279 and Glu-281.

Belongs to the NAD-dependent glycerol-3-phosphate dehydrogenase family.

It is found in the cytoplasm. The catalysed reaction is sn-glycerol 3-phosphate + NAD(+) = dihydroxyacetone phosphate + NADH + H(+). It carries out the reaction sn-glycerol 3-phosphate + NADP(+) = dihydroxyacetone phosphate + NADPH + H(+). It participates in membrane lipid metabolism; glycerophospholipid metabolism. Functionally, catalyzes the reduction of the glycolytic intermediate dihydroxyacetone phosphate (DHAP) to sn-glycerol 3-phosphate (G3P), the key precursor for phospholipid synthesis. This is Glycerol-3-phosphate dehydrogenase [NAD(P)+] from Pseudomonas savastanoi pv. phaseolicola (strain 1448A / Race 6) (Pseudomonas syringae pv. phaseolicola (strain 1448A / Race 6)).